The chain runs to 161 residues: ATP synthase subunit b 1 (161 aa).

A helical transmembrane segment spans residues 3-23 (FDASFFALVGLVLFFVLIAYL).

This sequence belongs to the ATPase B chain family. F-type ATPases have 2 components, F(1) - the catalytic core - and F(0) - the membrane proton channel. F(1) has five subunits: alpha(3), beta(3), gamma(1), delta(1), epsilon(1). F(0) has three main subunits: a(1), b(2) and c(10-14). The alpha and beta chains form an alternating ring which encloses part of the gamma chain. F(1) is attached to F(0) by a central stalk formed by the gamma and epsilon chains, while a peripheral stalk is formed by the delta and b chains.

Its subcellular location is the cell inner membrane. Its function is as follows. F(1)F(0) ATP synthase produces ATP from ADP in the presence of a proton or sodium gradient. F-type ATPases consist of two structural domains, F(1) containing the extramembraneous catalytic core and F(0) containing the membrane proton channel, linked together by a central stalk and a peripheral stalk. During catalysis, ATP synthesis in the catalytic domain of F(1) is coupled via a rotary mechanism of the central stalk subunits to proton translocation. In terms of biological role, component of the F(0) channel, it forms part of the peripheral stalk, linking F(1) to F(0). This chain is ATP synthase subunit b 1, found in Agrobacterium fabrum (strain C58 / ATCC 33970) (Agrobacterium tumefaciens (strain C58)).